The sequence spans 247 residues: tRNA pseudouridine synthase A (247 aa).

The active-site Nucleophile is Asp-52. Tyr-113 is a substrate binding site.

It belongs to the tRNA pseudouridine synthase TruA family. As to quaternary structure, homodimer.

The enzyme catalyses uridine(38/39/40) in tRNA = pseudouridine(38/39/40) in tRNA. Its function is as follows. Formation of pseudouridine at positions 38, 39 and 40 in the anticodon stem and loop of transfer RNAs. The chain is tRNA pseudouridine synthase A from Bartonella henselae (strain ATCC 49882 / DSM 28221 / CCUG 30454 / Houston 1) (Rochalimaea henselae).